Reading from the N-terminus, the 383-residue chain is MLLSVTSRPGISTFGYNKNNKKLYVAQQMAPPSPRNSTPNSSGGGGGGSGGNDQLSKTNLYIRGLQPGTTDQDLVKLCQPYGKIVSTKAILDKTTNKCKGYGFVDFDSPSSAQKAVTALKASGVQAQMAKQQEQDPTNLYISNLPLSMDEQELEGMLKPFGQVISTRILRDTSGASRGVGFARMESTEKCEAIITHFNGKYIKTPPGVAAPSDPLLCKFADGGPKKRQSQGRYVQNGRAWPRNGDMGGMALTYDPTAALQNGFYAAPYSIAHSRMLAQSALAPYLPSPVSSYQGSVLTPGMDHPLSLQPASMMGPLTQQLGHLSLNSLGTFMPAAAAMHGAYISQYPAVPSSSVSAEESNGQQNQLAVEPPSDHGVYPFQFSK.

N-acetylmethionine is present on Met1. The interval 28-56 (QMAPPSPRNSTPNSSGGGGGGSGGNDQLS) is disordered. Positions 42 to 51 (SGGGGGGSGG) are enriched in gly residues. RRM domains follow at residues 58–131 (TNLY…MAKQ) and 137–222 (TNLY…FADG). Ser108 is modified (phosphoserine). Ser287 is modified (phosphoserine). Residues 352–383 (SSVSAEESNGQQNQLAVEPPSDHGVYPFQFSK) form a disordered region.

The protein localises to the nucleus. This Mus musculus (Mouse) protein is RNA-binding motif, single-stranded-interacting protein 2 (Rbms2).